A 157-amino-acid chain; its full sequence is UPF0212 protein rrnAC1165 (157 aa).

The disordered stretch occupies residues 105–157; it reads VLEIEEIPEESDETTEDESSSAESEADADDPPSDQSADESDDVLPEFEELIDE. Acidic residues predominate over residues 106–157; sequence LEIEEIPEESDETTEDESSSAESEADADDPPSDQSADESDDVLPEFEELIDE.

Belongs to the UPF0212 family.

The sequence is that of UPF0212 protein rrnAC1165 from Haloarcula marismortui (strain ATCC 43049 / DSM 3752 / JCM 8966 / VKM B-1809) (Halobacterium marismortui).